The sequence spans 761 residues: Xaa-Pro dipeptidyl-peptidase (761 aa).

Catalysis depends on charge relay system residues Ser-349, Asp-469, and His-499.

This sequence belongs to the peptidase S15 family. Homodimer.

The protein resides in the cytoplasm. It catalyses the reaction Hydrolyzes Xaa-Pro-|- bonds to release unblocked, N-terminal dipeptides from substrates including Ala-Pro-|-p-nitroanilide and (sequentially) Tyr-Pro-|-Phe-Pro-|-Gly-Pro-|-Ile.. Its function is as follows. Removes N-terminal dipeptides sequentially from polypeptides having unsubstituted N-termini provided that the penultimate residue is proline. The chain is Xaa-Pro dipeptidyl-peptidase from Streptococcus equi subsp. equi (strain 4047).